We begin with the raw amino-acid sequence, 213 residues long: Orotate phosphoribosyltransferase (213 aa).

Lys-26 contributes to the 5-phospho-alpha-D-ribose 1-diphosphate binding site. 34-35 (FF) lines the orotate pocket. 5-phospho-alpha-D-ribose 1-diphosphate is bound by residues 72 to 73 (YK), Arg-99, Lys-100, Lys-103, His-105, and 124 to 132 (DDVITAGTA). Orotate is bound by residues Thr-128 and Arg-156.

Belongs to the purine/pyrimidine phosphoribosyltransferase family. PyrE subfamily. Homodimer. Mg(2+) is required as a cofactor.

The catalysed reaction is orotidine 5'-phosphate + diphosphate = orotate + 5-phospho-alpha-D-ribose 1-diphosphate. Its pathway is pyrimidine metabolism; UMP biosynthesis via de novo pathway; UMP from orotate: step 1/2. Catalyzes the transfer of a ribosyl phosphate group from 5-phosphoribose 1-diphosphate to orotate, leading to the formation of orotidine monophosphate (OMP). This Yersinia enterocolitica serotype O:8 / biotype 1B (strain NCTC 13174 / 8081) protein is Orotate phosphoribosyltransferase.